The following is a 186-amino-acid chain: Low amplitude and bright protein LabA (186 aa).

Functions in an output pathway of the circadian clock. One of three clock output pathways. Involved in negative feedback regulation of KaiC; deletion leads to overexpression of KaiC protein and decreases the amplitude of the circadian response. Overexpression reduces the expression of circadian genes. This Synechococcus elongatus (strain ATCC 33912 / PCC 7942 / FACHB-805) (Anacystis nidulans R2) protein is Low amplitude and bright protein LabA.